A 110-amino-acid polypeptide reads, in one-letter code: MEVLAKHRFARTSAQKARLVADQIRGLPVAKALEILTFSPKKAAVLVKKVLDSAIANAEHNEGADIDELKVGAVFVDEGPTMKRIMPRAKGRADRIMKRTSHITVVVSDR.

Belongs to the universal ribosomal protein uL22 family. In terms of assembly, part of the 50S ribosomal subunit.

Its function is as follows. This protein binds specifically to 23S rRNA; its binding is stimulated by other ribosomal proteins, e.g. L4, L17, and L20. It is important during the early stages of 50S assembly. It makes multiple contacts with different domains of the 23S rRNA in the assembled 50S subunit and ribosome. The globular domain of the protein is located near the polypeptide exit tunnel on the outside of the subunit, while an extended beta-hairpin is found that lines the wall of the exit tunnel in the center of the 70S ribosome. The polypeptide is Large ribosomal subunit protein uL22 (Shewanella baltica (strain OS223)).